Reading from the N-terminus, the 307-residue chain is Ribonuclease Z (307 aa).

Positions 63, 65, 67, 68, 143, 213, and 271 each coordinate Zn(2+). D67 functions as the Proton acceptor in the catalytic mechanism.

The protein belongs to the RNase Z family. As to quaternary structure, homodimer. It depends on Zn(2+) as a cofactor.

It catalyses the reaction Endonucleolytic cleavage of RNA, removing extra 3' nucleotides from tRNA precursor, generating 3' termini of tRNAs. A 3'-hydroxy group is left at the tRNA terminus and a 5'-phosphoryl group is left at the trailer molecule.. Functionally, zinc phosphodiesterase, which displays some tRNA 3'-processing endonuclease activity. Probably involved in tRNA maturation, by removing a 3'-trailer from precursor tRNA. The sequence is that of Ribonuclease Z from Lactococcus lactis subsp. cremoris (strain MG1363).